Reading from the N-terminus, the 464-residue chain is UDP-N-acetylmuramate--L-alanine ligase (464 aa).

123–129 is a binding site for ATP; the sequence is GTHGKTT.

This sequence belongs to the MurCDEF family.

The protein resides in the cytoplasm. It catalyses the reaction UDP-N-acetyl-alpha-D-muramate + L-alanine + ATP = UDP-N-acetyl-alpha-D-muramoyl-L-alanine + ADP + phosphate + H(+). The protein operates within cell wall biogenesis; peptidoglycan biosynthesis. In terms of biological role, cell wall formation. In Carboxydothermus hydrogenoformans (strain ATCC BAA-161 / DSM 6008 / Z-2901), this protein is UDP-N-acetylmuramate--L-alanine ligase.